The following is a 250-amino-acid chain: Eukaryotic translation initiation factor 3 subunit K (250 aa).

Residues 54–235 (YDLFGNLAIL…DVKAGVVKEN (182 aa)) enclose the PCI domain.

It belongs to the eIF-3 subunit K family. In terms of assembly, component of the eukaryotic translation initiation factor 3 (eIF-3) complex.

The protein resides in the cytoplasm. Component of the eukaryotic translation initiation factor 3 (eIF-3) complex, which is involved in protein synthesis of a specialized repertoire of mRNAs and, together with other initiation factors, stimulates binding of mRNA and methionyl-tRNAi to the 40S ribosome. The eIF-3 complex specifically targets and initiates translation of a subset of mRNAs involved in cell proliferation. This Cryptococcus neoformans var. neoformans serotype D (strain B-3501A) (Filobasidiella neoformans) protein is Eukaryotic translation initiation factor 3 subunit K.